The chain runs to 317 residues: Transaldolase (317 aa).

Residue Lys132 is the Schiff-base intermediate with substrate of the active site.

This sequence belongs to the transaldolase family. Type 1 subfamily. As to quaternary structure, homodimer.

The protein localises to the cytoplasm. It carries out the reaction D-sedoheptulose 7-phosphate + D-glyceraldehyde 3-phosphate = D-erythrose 4-phosphate + beta-D-fructose 6-phosphate. The protein operates within carbohydrate degradation; pentose phosphate pathway; D-glyceraldehyde 3-phosphate and beta-D-fructose 6-phosphate from D-ribose 5-phosphate and D-xylulose 5-phosphate (non-oxidative stage): step 2/3. Functionally, transaldolase is important for the balance of metabolites in the pentose-phosphate pathway. This is Transaldolase from Mannheimia succiniciproducens (strain KCTC 0769BP / MBEL55E).